The sequence spans 351 residues: Nicotinate-nucleotide--dimethylbenzimidazole phosphoribosyltransferase (351 aa).

The Proton acceptor role is filled by glutamate 317.

It belongs to the CobT family.

The catalysed reaction is 5,6-dimethylbenzimidazole + nicotinate beta-D-ribonucleotide = alpha-ribazole 5'-phosphate + nicotinate + H(+). The protein operates within nucleoside biosynthesis; alpha-ribazole biosynthesis; alpha-ribazole from 5,6-dimethylbenzimidazole: step 1/2. Catalyzes the synthesis of alpha-ribazole-5'-phosphate from nicotinate mononucleotide (NAMN) and 5,6-dimethylbenzimidazole (DMB). This Pseudomonas aeruginosa (strain LESB58) protein is Nicotinate-nucleotide--dimethylbenzimidazole phosphoribosyltransferase.